Reading from the N-terminus, the 189-residue chain is Glucose-6-phosphate isomerase (189 aa).

4 residues coordinate Fe cation: histidine 88, histidine 90, glutamate 97, and histidine 136.

This sequence belongs to the archaeal-type GPI family. As to quaternary structure, homodimer.

The protein localises to the cytoplasm. The catalysed reaction is alpha-D-glucose 6-phosphate = beta-D-fructose 6-phosphate. It functions in the pathway carbohydrate degradation; glycolysis; D-glyceraldehyde 3-phosphate and glycerone phosphate from D-glucose: step 2/4. This Thermococcus kodakarensis (strain ATCC BAA-918 / JCM 12380 / KOD1) (Pyrococcus kodakaraensis (strain KOD1)) protein is Glucose-6-phosphate isomerase.